The primary structure comprises 128 residues: MNIPSDRLYTDTHEWVNVSGDVATVGITEHAQRELSDIVYIELPKVGERFNQKAVVGVVESVKAASDLYAPVSGEILAVNTQLVEQPSLINSNPYGEGWIFKMKMTNPDELSSLKDAEAYQELLQDKE.

One can recognise a Lipoyl-binding domain in the interval 22–104 (VATVGITEHA…YGEGWIFKMK (83 aa)). K63 bears the N6-lipoyllysine mark.

It belongs to the GcvH family. In terms of assembly, the glycine cleavage system is composed of four proteins: P, T, L and H. The cofactor is (R)-lipoate.

Its function is as follows. The glycine cleavage system catalyzes the degradation of glycine. The H protein shuttles the methylamine group of glycine from the P protein to the T protein. In Methylacidiphilum infernorum (isolate V4) (Methylokorus infernorum (strain V4)), this protein is Glycine cleavage system H protein.